The primary structure comprises 195 residues: Probable thymidylate kinase (195 aa).

7-14 (GIDGVGKT) serves as a coordination point for ATP.

Belongs to the thymidylate kinase family.

It carries out the reaction dTMP + ATP = dTDP + ADP. The sequence is that of Probable thymidylate kinase from Methanosphaera stadtmanae (strain ATCC 43021 / DSM 3091 / JCM 11832 / MCB-3).